Here is a 317-residue protein sequence, read N- to C-terminus: Inositol oxygenase 2 (317 aa).

Residues arginine 57 and 115–117 (DES) each bind substrate. 3 residues coordinate Fe cation: histidine 128, histidine 153, and aspartate 154. Residues lysine 157 and 174–175 (GD) each bind substrate. The Fe cation site is built by histidine 226, histidine 252, and aspartate 285. 252–253 (HS) is a binding site for substrate.

It belongs to the myo-inositol oxygenase family. Requires Fe cation as cofactor. Expressed mainly in roots, stems, flowers and siliques. Low expression in leaves.

The protein localises to the cytoplasm. The enzyme catalyses myo-inositol + O2 = D-glucuronate + H2O + H(+). The protein operates within polyol metabolism; myo-inositol degradation into D-glucuronate; D-glucuronate from myo-inositol: step 1/1. In terms of biological role, involved in the biosynthesis of UDP-glucuronic acid (UDP-GlcA), providing nucleotide sugars for cell-wall polymers. May be also involved in plant ascorbate biosynthesis. The protein is Inositol oxygenase 2 (MIOX2) of Arabidopsis thaliana (Mouse-ear cress).